The chain runs to 431 residues: Divergent protein kinase domain 1B (431 aa).

Topologically, residues 1 to 30 (MRRLRRLAHLVLFCPFSKRLQGRLPGLRVR) are cytoplasmic. Positions 5-6 (RR) match the May mediate ER retention motif. Residues 31–51 (CIFLAWLGVFAGSWLVYVHYS) traverse the membrane as a helical segment. The Lumenal segment spans residues 52 to 431 (SYSERCRGHV…WKKISNTKYS (380 aa)). 2 disulfides stabilise this stretch: Cys57-Cys94 and Cys62-Cys117.

The protein belongs to the DIPK family. Among the many cysteines in the lumenal domain, most are probably involved in disulfide bonds.

The protein localises to the endoplasmic reticulum membrane. The sequence is that of Divergent protein kinase domain 1B from Homo sapiens (Human).